A 272-amino-acid polypeptide reads, in one-letter code: U11/U12 small nuclear ribonucleoprotein 35 kDa protein (272 aa).

The RRM domain occupies 51 to 129; that stretch reads LTLFVSRLSP…REVFVDFELE (79 aa). Basic and acidic residues-rich tracts occupy residues 146-162 and 190-272; these read GKKE…DRPF and RDRS…EHNR. Residues 146–272 are disordered; sequence GKKESGQLRF…RKHRSDEHNR (127 aa). A coiled-coil region spans residues 221–258; it reads TKDDKEQNAEHTKRERSREQAKNDKDKEKKDSKRERSR.

The protein localises to the nucleus. The protein is U11/U12 small nuclear ribonucleoprotein 35 kDa protein (snrnp35) of Xenopus laevis (African clawed frog).